The following is a 611-amino-acid chain: Protein Spindly (611 aa).

Residues 1–288 are a coiled coil; it reads MEESETVLKL…QFQSLQKQHA (288 aa). Residues 499–511 show a composition bias toward basic and acidic residues; it reads LKEDSSLSTKEQD. The interval 499–611 is disordered; sequence LKEDSSLSTK…PAATTQCPQQ (113 aa). Polar residues predominate over residues 549-567; it reads RNTNNCSVTSTSPRSASEE. Residues 570-583 are compositionally biased toward basic and acidic residues; that stretch reads SESKRFDEEQEKRK.

Belongs to the Spindly family.

It is found in the chromosome. Its subcellular location is the centromere. The protein resides in the kinetochore. Functionally, required for the localization of dynein and dynactin to the mitotic kintochore. Dynein is believed to control the initial lateral interaction between the kinetochore and spindle microtubules and to facilitate the subsequent formation of end-on kinetochore-microtubule attachments mediated by the NDC80 complex. May act as an adapter protein linking the dynein motor complex to various cargos. The polypeptide is Protein Spindly (spdl1) (Xenopus tropicalis (Western clawed frog)).